Here is an 87-residue protein sequence, read N- to C-terminus: uncharacterized protein (87 aa).

One can recognise a 2Fe-2S ferredoxin-type domain in the interval Ser-4–Ile-87. 4 residues coordinate [2Fe-2S] cluster: Cys-38, Cys-43, Cys-46, and Cys-75.

[2Fe-2S] cluster serves as cofactor.

This is an uncharacterized protein from Buchnera aphidicola subsp. Acyrthosiphon pisum (strain APS) (Acyrthosiphon pisum symbiotic bacterium).